A 226-amino-acid chain; its full sequence is Cytidylate kinase (226 aa).

10-18 (GPASSGKST) provides a ligand contact to ATP.

It belongs to the cytidylate kinase family. Type 1 subfamily.

It is found in the cytoplasm. It carries out the reaction CMP + ATP = CDP + ADP. It catalyses the reaction dCMP + ATP = dCDP + ADP. The sequence is that of Cytidylate kinase from Streptococcus pyogenes serotype M4 (strain MGAS10750).